The sequence spans 741 residues: Mitofusin-1 (741 aa).

Over 1 to 584 (MAEPVSPLKH…ASQEELMITL (584 aa)) the chain is Cytoplasmic. Positions 9–73 (KHFVLAKKAI…LSIIGEVLSR (65 aa)) are part of a helix bundle domain, formed by helices from N-terminal and C-terminal regions. Residues 72–321 (SRRHMKVAFF…ARLQEFQNFE (250 aa)) form the Dynamin-type G domain. The segment at 82–89 (GRTSSGKS) is G1 motif. Position 85 to 90 (85 to 90 (SSGKSS)) interacts with GTP. Residues 108–109 (IT) are G2 motif. Residues 178–181 (DSPG) form a G3 motif region. Residue 237 to 240 (NRWD) coordinates GTP. The G4 motif stretch occupies residues 237-240 (NRWD). Position 266 (Glu266) is a region of interest, G5 motif. GTP contacts are provided by Ser284 and Lys286. The segment at 338 to 364 (EQHTIRAKQILATVKNIMDSVNLAAED) is part of a helix bundle domain, formed by helices from N-terminal and C-terminal regions. Positions 371 to 408 (EEREDQIDRLDFIRNQMNLLTLDVKKKIKEVTEEVANK) form a coiled coil. Residues 585–605 (VTGLASVTSRTSMGIIIVGGV) form a helical membrane-spanning segment. Residues 606 to 608 (IWK) lie on the Mitochondrial intermembrane side of the membrane. The helical transmembrane segment at 609–629 (TIGWKLLSVSLTMYGALYLYE) threads the bilayer. Topologically, residues 630 to 741 (RLSWTTHAKE…QFLPSSNEES (112 aa)) are cytoplasmic. The stretch at 679–734 (RLCQQVDITQKQLEEEIARLPKEIDQLEKIQNNSKLLRNKAVQLENELENFTKQFL) forms a coiled coil. The segment at 703-734 (DQLEKIQNNSKLLRNKAVQLENELENFTKQFL) is part of a helix bundle domain, formed by helices from N-terminal and C-terminal regions.

The protein belongs to the TRAFAC class dynamin-like GTPase superfamily. Dynamin/Fzo/YdjA family. Mitofusin subfamily. In terms of assembly, homodimer, also in the absence of bound GTP. Forms higher oligomers in the presence of a transition state GTP analog. Forms homomultimers and heteromultimers with MFN2. Oligomerization is essential for mitochondrion fusion. Component of a high molecular weight multiprotein complex. Interacts with VAT1. Interacts with THG1L; THG1L probably functions as a guanyl-nucleotide exchange factor/GEF, activating MFN1. In terms of processing, ubiquitinated by non-degradative ubiquitin by PRKN. Deubiquitination by USP30 inhibits mitochondrial fusion. Ubiquitinated by MARCHF5. When mitochondria are depolarized and dysfunctional, it is ubiquitinated by a SCF (SKP1-CUL1-F-box protein) E3 ubiquitin-protein ligase complex that contains FBXO7 and PRKN. Detected in kidney and heart (at protein level). Ubiquitous. Expressed at slightly higher level in kidney and heart. Isoform 2 may be overexpressed in some tumors, such as lung cancers.

The protein localises to the mitochondrion outer membrane. The protein resides in the cytoplasm. The catalysed reaction is GTP + H2O = GDP + phosphate + H(+). Functionally, mitochondrial outer membrane GTPase that mediates mitochondrial clustering and fusion. Membrane clustering requires GTPase activity. It may involve a major rearrangement of the coiled coil domains. Mitochondria are highly dynamic organelles, and their morphology is determined by the equilibrium between mitochondrial fusion and fission events. Overexpression induces the formation of mitochondrial networks (in vitro). Has low GTPase activity. This is Mitofusin-1 (MFN1) from Homo sapiens (Human).